Here is a 535-residue protein sequence, read N- to C-terminus: Large neutral amino acids transporter small subunit 2 (535 aa).

Basic residues predominate over residues 1-10; sequence MEKGARHRHN. Residues 1–30 are disordered; it reads MEKGARHRHNTDKNHAGGSESEDFPEASSG. Topologically, residues 1–44 are cytoplasmic; that stretch reads MEKGARHRHNTDKNHAGGSESEDFPEASSGGGGVALKKEIGLVS. A phosphoserine mark is found at Ser-19, Ser-28, and Ser-29. A helical membrane pass occupies residues 45-65; it reads ACGIIVGNIIGSGIFVSPKGV. Ile-53 contacts L-leucine. Residues 66-73 lie on the Extracellular side of the membrane; it reads LENAGSVG. The helical transmembrane segment at 74–95 threads the bilayer; the sequence is LAVIVWIVTGLITAVGALCYAE. Topologically, residues 96–116 are cytoplasmic; that stretch reads LGVTIPKSGGDYSYVKDIFGG. The helical transmembrane segment at 117–149 threads the bilayer; it reads LAGFLRLWIAVLVIYPTNQAVIALTFSNYVLQP. Asn-134 serves as a coordination point for L-tryptophan. The Extracellular portion of the chain corresponds to 150-157; the sequence is LFPTCFPP. A helical transmembrane segment spans residues 158 to 178; that stretch reads DSGLRLLAAICLLLLTWVNCS. Residues 179–181 lie on the Cytoplasmic side of the membrane; that stretch reads SVR. A helical transmembrane segment spans residues 182–210; the sequence is WATRVQDIFTAGKLLALALIIIMGVVQIC. The Extracellular segment spans residues 211–230; it reads KGEYFWLEPKNAFDNFQEPD. Residues 231-252 form a helical membrane-spanning segment; the sequence is IGLIALAFLQGSFAYGGWNFLN. Gly-246 contacts L-leucine. The Cytoplasmic segment spans residues 253-265; it reads YVTEELVDPYKNL. A helical membrane pass occupies residues 266–287; it reads PRAIFISIPLVTFVYVFANVAY. At 288–312 the chain is on the extracellular side; it reads ITAMSPQELLASNAVAVTFGEKLLG. The helical transmembrane segment at 313-338 threads the bilayer; it reads VMAWIMPISVALSTFGGVNGSLFTSS. Topologically, residues 339–364 are cytoplasmic; that stretch reads RLFFAGAREGHLPSVLAMIHVKRCTP. A helical transmembrane segment spans residues 365 to 382; it reads IPALLFTCLSTLLMLVTS. Residues 383–386 are Extracellular-facing; that stretch reads DMYT. A helical membrane pass occupies residues 387 to 408; sequence LINYVGFINYLFYGVTVAGQIV. Residue Asn-395 participates in L-tryptophan binding. Residues 409–423 are Cytoplasmic-facing; that stretch reads LRWKKPDIPRPIKIN. 2 helical membrane-spanning segments follow: residues 424 to 446 and 447 to 466; these read LLFP…WSEP and VVCG…YFLG. The Cytoplasmic segment spans residues 467-535; the sequence is VYWQHKPKCF…DKDSLEQSQP (69 aa). The tract at residues 500-535 is disordered; that stretch reads GGSGTEGTREDMEEQQQPICQPSPGKDKDSLEQSQP. Positions 524–535 are enriched in basic and acidic residues; the sequence is GKDKDSLEQSQP. Phosphoserine is present on Ser-529.

The protein belongs to the amino acid-polyamine-organocation (APC) superfamily. L-type amino acid transporter (LAT) (TC 2.A.3.8) family. As to quaternary structure, disulfide-linked heterodimer composed of the catalytic light chain subunit SLC7A8 and the heavy chain subunit SLC3A2. SLC3A2 acts as a chaperone for correct plasma membrane trafficking and stabilization of SLC7A8 and modulates the substrate affinity and specificity of SLC7A8. ICAM-1 associates with the heterodimer SLC3A2/SLC7A8; facilitates leucine uptake. As to expression, mainly expressed in kidney and small intestine.

It localises to the cell membrane. The protein resides in the basolateral cell membrane. The catalysed reaction is L-histidine(in) + L-phenylalanine(out) = L-histidine(out) + L-phenylalanine(in). The enzyme catalyses L-tryptophan(in) + L-phenylalanine(out) = L-tryptophan(out) + L-phenylalanine(in). It catalyses the reaction L-isoleucine(in) + L-phenylalanine(out) = L-isoleucine(out) + L-phenylalanine(in). It carries out the reaction L-valine(in) + L-phenylalanine(out) = L-valine(out) + L-phenylalanine(in). The catalysed reaction is L-leucine(in) + L-phenylalanine(out) = L-leucine(out) + L-phenylalanine(in). The enzyme catalyses L-glutamine(in) + L-phenylalanine(out) = L-glutamine(out) + L-phenylalanine(in). It catalyses the reaction L-cysteine(in) + L-phenylalanine(out) = L-cysteine(out) + L-phenylalanine(in). It carries out the reaction L-phenylalanine(out) + L-methionine(in) = L-phenylalanine(in) + L-methionine(out). The catalysed reaction is L-leucine(out) + L-methionine(in) = L-leucine(in) + L-methionine(out). The enzyme catalyses L-cysteine(out) + L-methionine(in) = L-cysteine(in) + L-methionine(out). It catalyses the reaction S-methylmercury-L-cysteine(out) + L-methionine(in) = S-methylmercury-L-cysteine(in) + L-methionine(out). It carries out the reaction S-methylmercury-L-cysteine(in) + L-leucine(out) = S-methylmercury-L-cysteine(out) + L-leucine(in). The catalysed reaction is S-methylmercury-L-cysteine(in) + L-phenylalanine(out) = S-methylmercury-L-cysteine(out) + L-phenylalanine(in). The enzyme catalyses L-phenylalanine(out) + L-serine(in) = L-phenylalanine(in) + L-serine(out). It catalyses the reaction L-phenylalanine(out) + glycine(in) = L-phenylalanine(in) + glycine(out). It carries out the reaction L-phenylalanine(out) + L-alanine(in) = L-phenylalanine(in) + L-alanine(out). The catalysed reaction is 3,3',5-triiodo-L-thyronine(out) = 3,3',5-triiodo-L-thyronine(in). The enzyme catalyses 3,3'-diiodo-L-thyronine(out) = 3,3'-diiodo-L-thyronine(in). It catalyses the reaction L-dopa(out) + L-phenylalanine(in) = L-dopa(in) + L-phenylalanine(out). The transporter activity is inhibited by 2-aminobicyclo-(2,2,1)heptane-2-carboxylic acid (BCH) (a specific inhibitor of system L transport). Associates with SLC3A2 to form a functional heterodimeric complex that translocates small and large neutral amino acids with broad specificity and a stoichiometry of 1:1. Functions as amino acid antiporter mediating the influx of extracellular essential amino acids mainly in exchange with the efflux of highly concentrated intracellular amino acids. Has relatively symmetrical selectivities but strongly asymmetrical substrate affinities at both the intracellular and extracellular sides of the transporter. This asymmetry allows SLC7A8 to regulate intracellular amino acid pools (mM concentrations) by exchange with external amino acids (uM concentration range), equilibrating the relative concentrations of different amino acids across the plasma membrane instead of mediating their net uptake. May play an essential role in the reabsorption of neutral amino acids from the epithelial cells to the bloodstream in the kidney. Involved in the uptake of methylmercury (MeHg) when administered as the L-cysteine or D,L-homocysteine complexes, and hence plays a role in metal ion homeostasis and toxicity. Involved in the cellular activity of small molecular weight nitrosothiols, via the stereoselective transport of L-nitrosocysteine (L-CNSO) across the transmembrane. Imports the thyroid hormone diiodothyronine (T2) and to a smaller extent triiodothyronine (T3) but not rT 3 or thyroxine (T4). Mediates the uptake of L-DOPA. May participate in auditory function. The protein is Large neutral amino acids transporter small subunit 2 of Oryctolagus cuniculus (Rabbit).